Consider the following 320-residue polypeptide: N-acetylneuraminate lyase (320 aa).

Aceneuramate is bound by residues Thr-51 and Thr-52. Tyr-143 serves as the catalytic Proton donor. Catalysis depends on Lys-173, which acts as the Schiff-base intermediate with substrate. 5 residues coordinate aceneuramate: Thr-175, Gly-199, Asp-201, Glu-202, and Ser-218. Residue Ser-308 is modified to Phosphoserine.

This sequence belongs to the DapA family. NanA subfamily. As to quaternary structure, homotetramer.

The protein resides in the cytoplasm. The enzyme catalyses aceneuramate = aldehydo-N-acetyl-D-mannosamine + pyruvate. It participates in amino-sugar metabolism; N-acetylneuraminate degradation. Catalyzes the cleavage of N-acetylneuraminic acid (sialic acid) to form pyruvate and N-acetylmannosamine via a Schiff base intermediate. It prevents sialic acids from being recycled and returning to the cell surface. Involved in the N-glycolylneuraminic acid (Neu5Gc) degradation pathway. The polypeptide is N-acetylneuraminate lyase (Mus musculus (Mouse)).